The chain runs to 378 residues: MSHVDDGFRSLTLKRFPQTDDVNPLLAWEAADEYLLQQLDETEIRGPVLILNDTFGALSCALAEHSPYSIGDSYLSELGTRENLRHNGIAESSVTFLNSTADYPQAPGVVLIKVPKTLALLEQQLRALRKVVTAQTRIIAGAKARDIHTSTLELFEKVLGPTTTTLAWKKARLINCTFSHPQLADAPQTLSWKLEDTGWTIHNHANVFSRTGLDIGARFFMQHLPENLDGEIVDLGCGNGVIGLSLLAKNPQANVVFVDESPMAVDSSRLNVETNLPEAFERCEFMINNALSGVEPFRFNAVFCNPPFHQKHALTDNIAWEMFHHARRCLKINGELYIVANRHLDYFHKLKKIFGNCATIATNNKFVILKAVKQGHRR.

The protein belongs to the methyltransferase superfamily. RlmG family.

The protein localises to the cytoplasm. It catalyses the reaction guanosine(1835) in 23S rRNA + S-adenosyl-L-methionine = N(2)-methylguanosine(1835) in 23S rRNA + S-adenosyl-L-homocysteine + H(+). Specifically methylates the guanine in position 1835 (m2G1835) of 23S rRNA. In Salmonella gallinarum (strain 287/91 / NCTC 13346), this protein is Ribosomal RNA large subunit methyltransferase G.